The chain runs to 678 residues: NADPH--cytochrome P450 reductase (678 aa).

Glycine 2 bears the N-acetylglycine mark. The Lumenal segment spans residues 2–22 (GDSHEDTSATMPEAVAEEVSL). The helical transmembrane segment at 23–43 (FSTTDMVLFSLIVGVLTYWFI) threads the bilayer. The Cytoplasmic portion of the chain corresponds to 44 to 678 (FRKKKEEIPE…KGRYSLDVWS (635 aa)). The Flavodoxin-like domain occupies 80 to 224 (IIVFYGSQTG…DFITWREQFW (145 aa)). Residues 86-91 (SQTGTA), 138-141 (ATYG), 173-182 (LGNKTYEHFN), and aspartate 208 each bind FMN. In terms of domain architecture, FAD-binding FR-type spans 279-521 (KNPFLAAVTA…FVRKSQFRLP (243 aa)). An NADP(+)-binding site is contributed by arginine 298. Residues arginine 424, 454–457 (RYYS), 472–474 (CAV), tyrosine 478, and 488–491 (GVAT) contribute to the FAD site. Residues threonine 535, 596–597 (SR), 602–606 (KVYVQ), and aspartate 639 contribute to the NADP(+) site. Tryptophan 677 is an FAD binding site.

Belongs to the NADPH--cytochrome P450 reductase family. It in the N-terminal section; belongs to the flavodoxin family. This sequence in the C-terminal section; belongs to the flavoprotein pyridine nucleotide cytochrome reductase family. FAD serves as cofactor. FMN is required as a cofactor.

It localises to the endoplasmic reticulum membrane. The catalysed reaction is 2 oxidized [cytochrome P450] + NADPH = 2 reduced [cytochrome P450] + NADP(+) + H(+). Functionally, this enzyme is required for electron transfer from NADP to cytochrome P450 in microsomes. It can also provide electron transfer to heme oxygenase and cytochrome B5. The chain is NADPH--cytochrome P450 reductase from Rattus norvegicus (Rat).